We begin with the raw amino-acid sequence, 103 residues long: UPF0102 protein aq_041 (103 aa).

It belongs to the UPF0102 family.

The sequence is that of UPF0102 protein aq_041 from Aquifex aeolicus (strain VF5).